The following is a 556-amino-acid chain: Membrane protein insertase YidC (556 aa).

A helical membrane pass occupies residues 7–27 (ILLVALAVVAYLMVLQWNQDY). Disordered regions lie at residues 35-59 (ETAQ…GNAN) and 126-152 (SSER…PQYS). The segment covering 36–54 (TAQSQPAAPALPDSPSATT) has biased composition (low complexity). 4 helical membrane passes run 365-385 (LLGN…LAFF), 435-455 (LGGC…YWVL), 468-488 (FWIT…IMGV), and 513-533 (PIIF…YWVV).

This sequence belongs to the OXA1/ALB3/YidC family. Type 1 subfamily. As to quaternary structure, interacts with the Sec translocase complex via SecD. Specifically interacts with transmembrane segments of nascent integral membrane proteins during membrane integration.

Its subcellular location is the cell inner membrane. Its function is as follows. Required for the insertion and/or proper folding and/or complex formation of integral membrane proteins into the membrane. Involved in integration of membrane proteins that insert both dependently and independently of the Sec translocase complex, as well as at least some lipoproteins. Aids folding of multispanning membrane proteins. The protein is Membrane protein insertase YidC of Stutzerimonas stutzeri (strain A1501) (Pseudomonas stutzeri).